Consider the following 167-residue polypeptide: Photosystem I assembly protein Ycf3 (167 aa).

TPR repeat units lie at residues 35–68 (AFTY…EIDP), 72–105 (SYIL…NPSL), and 120–153 (GEQA…APSN).

It belongs to the Ycf3 family.

It is found in the plastid. Its subcellular location is the chloroplast thylakoid membrane. Its function is as follows. Essential for the assembly of the photosystem I (PSI) complex. May act as a chaperone-like factor to guide the assembly of the PSI subunits. The protein is Photosystem I assembly protein Ycf3 of Marchantia polymorpha (Common liverwort).